The sequence spans 562 residues: MAASAKRKQEEKHLKMLRDMTGLPHNRKCFDCDQRGPTYVNMTVGSFVCTSCSGSLRGLNPPHRVKSISMTTFTQQEIEFLQKHGNEVCKQIWLGLFDDRSSAIPDFRDPQKVKEFLQEKYEKKRWYVPPEQAKVVASVHASISGSSASSTSSTPEVKPLKSLLGDSAPTLHLNKGTPSQSPVVGRSQGQQQEKKQFDLLSDLGSDIFAAPAPQSTATANFANFAHFNSHAAQNSANADFANFDAFGQSSGSSNFGGFPTASHSPFQPQTTGGSAASVNANFAHFDNFPKSSSADFGTFNTSQSHQTASAVSKVSTNKAGLQTADKYAALANLDNIFSAGQGGDQGSGFGTTGKAPVGSVVSVPSQSSASSDKYAALAELDSVFSSAATSSNAYTSTSNASSNVFGTVPVVASAQTQPASSSVPAPFGATPSTNPFVAAAGPSVASSTNPFQTNARGATAATFGTASMSMPTGFGTPAPYSLPTSFSGSFQQPAFPAQAAFPQQTAFSQQPNGAGFAAFGQTKPVVTPFGQVAAAGVSSNPFMTGAPTGQFPTGSSSTNPFL.

The Arf-GAP domain occupies 11–135 (EKHLKMLRDM…WYVPPEQAKV (125 aa)). The segment at 29–52 (CFDCDQRGPTYVNMTVGSFVCTSC) adopts a C4-type zinc-finger fold. The segment at 145-193 (GSSASSTSSTPEVKPLKSLLGDSAPTLHLNKGTPSQSPVVGRSQGQQQE) is disordered. Ser-167 carries the post-translational modification Phosphoserine. A compositionally biased stretch (polar residues) spans 176-191 (GTPSQSPVVGRSQGQQ). Phosphothreonine is present on Thr-177. Phosphoserine occurs at positions 181 and 362. Ser-367 carries O-linked (GlcNAc) serine glycosylation.

In terms of assembly, interacts with EPS15R and EPS15. Interacts with FCHO1. O-glycosylated. Ubiquitously expressed.

It is found in the nucleus. It localises to the cytoplasmic vesicle. Functionally, required for vesicle docking or fusion during acrosome biogenesis. May play a role in RNA trafficking or localization. In case of infection by HIV-1, acts as a cofactor for viral Rev and promotes movement of Rev-responsive element-containing RNAs from the nuclear periphery to the cytoplasm. This step is essential for HIV-1 replication. In Homo sapiens (Human), this protein is Arf-GAP domain and FG repeat-containing protein 1 (AGFG1).